We begin with the raw amino-acid sequence, 212 residues long: Large ribosomal subunit protein uL1 (212 aa).

This sequence belongs to the universal ribosomal protein uL1 family. In terms of assembly, part of the 50S ribosomal subunit.

Binds directly to 23S rRNA. Probably involved in E site tRNA release. Functionally, protein L1 is also a translational repressor protein, it controls the translation of its operon by binding to its mRNA. The sequence is that of Large ribosomal subunit protein uL1 from Methanothermobacter thermautotrophicus (strain ATCC 29096 / DSM 1053 / JCM 10044 / NBRC 100330 / Delta H) (Methanobacterium thermoautotrophicum).